A 525-amino-acid polypeptide reads, in one-letter code: MDMPEDQAGGPTAKMYLWDQAEDRSLGTLLSLEEQILNSTFEACDPQRTGTVAVTHLLAYLEAVTGRGPQDARLQTLACSLDPSGEGPQATVDLDTFLVVMRDWITACQLDGGLELEEETAFEGALTSQQLPSGCPEVEDPANLESFGGEDPRPELPATADLLSSLEDLELSNRRLAGENAKLQRSVETAEEGSARLGEEISALRKQLRSTQQALQLARGVDEELEDLKTLAKSLEEQNRSLLAQARHTEKEQQRLVAEMETLQEENGKLLAERDGVKRRSEELASEKDILKRQLYECEHLICQRDAILSERTRHAESLTKTLEEYRATTQELRLEISHLEEQLSQTQEGLDELSEGAQVRRVDCTNLLPPSLGVELQAIQQRNLQEESAHPQEGREEPSTRLPRREEEDGAEIQVMVDLPLHPEDSHPGDILGNPPESSPSEPELQQALVPMVKELVPVRRPVWGQLCLWPLHLRRLRVTRHLLIPAPLLGLLLLLLLSVLLLGQSPPPTWPHLQLCYLQPPPV.

Residues 1–483 (MDMPEDQAGG…HLRRLRVTRH (483 aa)) are Cytoplasmic-facing. A disordered region spans residues 127–156 (TSQQLPSGCPEVEDPANLESFGGEDPRPEL). The stretch at 164–360 (SSLEDLELSN…LDELSEGAQV (197 aa)) forms a coiled coil. 2 disordered regions span residues 384–409 (NLQE…REEE) and 423–444 (HPED…PSEP). Residues 385–408 (LQEESAHPQEGREEPSTRLPRREE) show a composition bias toward basic and acidic residues. A helical; Anchor for type IV membrane protein transmembrane segment spans residues 484–504 (LLIPAPLLGLLLLLLLSVLLL). Over 505–525 (GQSPPPTWPHLQLCYLQPPPV) the chain is Perinuclear space.

Core component the LINC complex which is composed of inner nuclear membrane SUN domain-containing proteins coupled to outer nuclear membrane KASH domain-containing nesprins. SUN and KASH domain-containing proteins seem to bind each other promiscuously; however, differentially expression of LINC complex constituents is giving rise to specific assemblies. At least SUN1/2-containing core LINC complexes are proposed to be hexameric composed of three protomers of each KASH and SUN domain-containing protein. Interacts with SUN1; this interaction mediates its telomere localization by forming a SUN1:KASH5 LINC complex. Component of a probable SUN2:KASH5 LINC complex. Self-associates. Interacts with DYNC1H1, DCTN1, DYNC1I1/2 and PAFAH1B1; suggesting the association with the dynein-dynactin motor complex.

The protein resides in the nucleus outer membrane. It localises to the nucleus. The protein localises to the chromosome. It is found in the telomere. Its subcellular location is the nucleus envelope. Functionally, as a component of the LINC (LInker of Nucleoskeleton and Cytoskeleton) complex, involved in the connection between the nuclear lamina and the cytoskeleton. The nucleocytoplasmic interactions established by the LINC complex play an important role in the transmission of mechanical forces across the nuclear envelope and in nuclear movement and positioning. Required for telomere attachment to nuclear envelope in the prophase of meiosis and for rapid telomere prophase movements implicating a SUN1/2:KASH5 LINC complex in which SUN1 and SUN2 seem to act at least partial redundantly. Required for homolog pairing during meiotic prophase in spermatocytes and probably oocytes. Essential for male and female gametogenesis. Recruits cytoplasmic dynein to telomere attachment sites at the nuclear envelope in spermatocytes. In oocytes is involved in meiotic resumption and spindle formation. In Bos taurus (Bovine), this protein is Protein KASH5 (KASH5).